A 446-amino-acid chain; its full sequence is Tubulin beta chain (446 aa).

Residues Gln-11, Glu-69, Ser-138, Gly-142, Thr-143, Gly-144, Asn-204, and Asn-226 each contribute to the GTP site. Glu-69 serves as a coordination point for Mg(2+). The segment at 426 to 446 (QDATAEEEGEYVEDEDEMDGM) is disordered. The segment covering 429 to 446 (TAEEEGEYVEDEDEMDGM) has biased composition (acidic residues).

It belongs to the tubulin family. As to quaternary structure, dimer of alpha and beta chains. A typical microtubule is a hollow water-filled tube with an outer diameter of 25 nm and an inner diameter of 15 nM. Alpha-beta heterodimers associate head-to-tail to form protofilaments running lengthwise along the microtubule wall with the beta-tubulin subunit facing the microtubule plus end conferring a structural polarity. Microtubules usually have 13 protofilaments but different protofilament numbers can be found in some organisms and specialized cells. Mg(2+) serves as cofactor.

It localises to the cytoplasm. The protein resides in the cytoskeleton. In terms of biological role, tubulin is the major constituent of microtubules, a cylinder consisting of laterally associated linear protofilaments composed of alpha- and beta-tubulin heterodimers. Microtubules grow by the addition of GTP-tubulin dimers to the microtubule end, where a stabilizing cap forms. Below the cap, tubulin dimers are in GDP-bound state, owing to GTPase activity of alpha-tubulin. This is Tubulin beta chain from Euplotes crassus.